A 154-amino-acid chain; its full sequence is Endoribonuclease YbeY (154 aa).

3 residues coordinate Zn(2+): His-114, His-118, and His-124.

It belongs to the endoribonuclease YbeY family. The cofactor is Zn(2+).

Its subcellular location is the cytoplasm. Single strand-specific metallo-endoribonuclease involved in late-stage 70S ribosome quality control and in maturation of the 3' terminus of the 16S rRNA. This chain is Endoribonuclease YbeY, found in Haemophilus influenzae (strain PittEE).